The primary structure comprises 296 residues: Elongation factor Ts (296 aa).

The interval 79 to 82 (TDFV) is involved in Mg(2+) ion dislocation from EF-Tu.

It belongs to the EF-Ts family.

It is found in the cytoplasm. Functionally, associates with the EF-Tu.GDP complex and induces the exchange of GDP to GTP. It remains bound to the aminoacyl-tRNA.EF-Tu.GTP complex up to the GTP hydrolysis stage on the ribosome. The polypeptide is Elongation factor Ts (Paracoccus denitrificans (strain Pd 1222)).